A 420-amino-acid polypeptide reads, in one-letter code: G2/mitotic-specific cyclin-A (420 aa).

Positions 64–93 (VQGSRIQPTRAAKEKLKPPQNISDSQLVND) are disordered. Residues 83–93 (QNISDSQLVND) show a composition bias toward polar residues.

Belongs to the cyclin family. Cyclin AB subfamily.

Functionally, essential for the control of the cell cycle at the G2/M (mitosis) transition. Interacts with the CDC2 and CDK2 protein kinases to form MPF. G2/M cyclins accumulate steadily during G2 and are abruptly destroyed at mitosis. In Hydra viridissima (Green hydra), this protein is G2/mitotic-specific cyclin-A.